We begin with the raw amino-acid sequence, 463 residues long: MNLLSFTTIPTHVCAFNKRKIGDETNLEGKGYKSYASDEFMEWMTTNSDTKSEKASRVYNSLKEFSEGVDTNGDPVKLSKLDFTENHMDDIGENPDYQPVSLHRLNRQAMKLPNVALAMTRSIYLNDPGILTGKDMVELYHGFHMDGEEVSNNKEAKSTCELLANIDDSKKLNTAVNFLGKEQLLNMTNECNKSVGGDGYTNKPIKIKDSDLLKHKLERQVKESPINTTRIMNEIICQEIEPNYYTSLFLHKTKDWELIEDTLDTSDMEYMVELFEQHVREKTINLLDGRMGGMREELYYTVLPPRFRLKAQDSTPFIDIYAQHLLGVDSGMIRALYEICTFNDVKKITNSTVLLKKMTTTLKQIEKTQQNLLAQWGRLMWFVIYTELIRNTGDDLVTLKIKPTDKPEEISNAFVSIKLSLYHHKGHYYCLVDDKGNGFVSKDFRVLLARVHKELQTMSKNSA.

This is an uncharacterized protein from Ostreid herpesvirus 1 (isolate France) (OsHV-1).